We begin with the raw amino-acid sequence, 333 residues long: Homeobox protein engrailed-2 (333 aa).

Disordered regions lie at residues 1–49, 95–206, and 223–250; these read MEEN…RALM, GRGG…GANL, and SDRP…PRTA. Gly residues-rich tracts occupy residues 25-36 and 95-117; these read PGGGSGGGGGSS and GRGG…GAGG. 2 stretches are compositionally biased toward low complexity: residues 142–151 and 191–200; these read PLPAAGSDSP and LSVSSDSDSS. Positions 244–303 form a DNA-binding region, homeobox; it reads DKRPRTAFTAEQLQRLKAEFQTNRYLTEQRRQSLAQELSLNESQIKIWFQNKRAKIKKAT.

Belongs to the engrailed homeobox family.

The protein localises to the nucleus. The polypeptide is Homeobox protein engrailed-2 (EN2) (Homo sapiens (Human)).